A 125-amino-acid chain; its full sequence is Small ribosomal subunit protein uS13 (125 aa).

A disordered region spans residues 91–125 (HRRGLPARGQRTRTNARTRKGKRKTVAGKKKAGKK).

It belongs to the universal ribosomal protein uS13 family. As to quaternary structure, part of the 30S ribosomal subunit. Forms a loose heterodimer with protein S19. Forms two bridges to the 50S subunit in the 70S ribosome.

In terms of biological role, located at the top of the head of the 30S subunit, it contacts several helices of the 16S rRNA. In the 70S ribosome it contacts the 23S rRNA (bridge B1a) and protein L5 of the 50S subunit (bridge B1b), connecting the 2 subunits; these bridges are implicated in subunit movement. Contacts the tRNAs in the A and P-sites. This chain is Small ribosomal subunit protein uS13, found in Chloroherpeton thalassium (strain ATCC 35110 / GB-78).